A 120-amino-acid chain; its full sequence is Phosphoribosyl-ATP pyrophosphatase (120 aa).

A disordered region spans residues 97-120; it reads REGTSGLVEKASRPAKKDSGTADS. The span at 106 to 120 shows a compositional bias: basic and acidic residues; the sequence is KASRPAKKDSGTADS.

Belongs to the PRA-PH family.

Its subcellular location is the cytoplasm. The enzyme catalyses 1-(5-phospho-beta-D-ribosyl)-ATP + H2O = 1-(5-phospho-beta-D-ribosyl)-5'-AMP + diphosphate + H(+). It functions in the pathway amino-acid biosynthesis; L-histidine biosynthesis; L-histidine from 5-phospho-alpha-D-ribose 1-diphosphate: step 2/9. The protein is Phosphoribosyl-ATP pyrophosphatase of Rhodopirellula baltica (strain DSM 10527 / NCIMB 13988 / SH1).